The primary structure comprises 126 residues: Aspartate 1-decarboxylase (126 aa).

S25 (schiff-base intermediate with substrate; via pyruvic acid) is an active-site residue. The residue at position 25 (S25) is a Pyruvic acid (Ser). T57 provides a ligand contact to substrate. The active-site Proton donor is the Y58. 73 to 75 (GAA) contributes to the substrate binding site.

This sequence belongs to the PanD family. Heterooctamer of four alpha and four beta subunits. Pyruvate serves as cofactor. In terms of processing, is synthesized initially as an inactive proenzyme, which is activated by self-cleavage at a specific serine bond to produce a beta-subunit with a hydroxyl group at its C-terminus and an alpha-subunit with a pyruvoyl group at its N-terminus.

It localises to the cytoplasm. The enzyme catalyses L-aspartate + H(+) = beta-alanine + CO2. It functions in the pathway cofactor biosynthesis; (R)-pantothenate biosynthesis; beta-alanine from L-aspartate: step 1/1. Its function is as follows. Catalyzes the pyruvoyl-dependent decarboxylation of aspartate to produce beta-alanine. The protein is Aspartate 1-decarboxylase of Psychromonas ingrahamii (strain DSM 17664 / CCUG 51855 / 37).